We begin with the raw amino-acid sequence, 345 residues long: High mobility group protein 20A (345 aa).

Disordered stretches follow at residues 1–130 and 166–206; these read MEST…PFPE and QKYQ…EKES. Polar residues-rich tracts occupy residues 22-38 and 57-67; these read NNQP…SSQA and LHQSGEQQLGN. A compositionally biased stretch (basic residues) spans 80–94; sequence ARRGGWNKGRKRKRS. Residues 101–169 constitute a DNA-binding region (HMG box); it reads PKAPLTGYVR…RYTKELQKYQ (69 aa). Residues 112-125 show a composition bias toward basic and acidic residues; that stretch reads MNERREQLRTERPD. Polar residues predominate over residues 167–178; the sequence is KYQNTDAYQTYS. Residues 179 to 189 show a composition bias toward basic residues; sequence RKAKSRQKGRQ. Residues 227–285 adopt a coiled-coil conformation; that stretch reads SKAREAELRQLRKSNMEFEERNAALQKHVESMRSAVQRLEAELSQEHERNSLLQQHLQS.

The protein resides in the nucleus. Plays a role in neuronal differentiation. The sequence is that of High mobility group protein 20A (hmg20a) from Xenopus laevis (African clawed frog).